We begin with the raw amino-acid sequence, 497 residues long: Cytochrome P450 98A8 (497 aa).

The chain crosses the membrane as a helical span at residues 2–19 (IIYLISLLPIIVATLMLY). Cys-431 contributes to the heme binding site.

The protein belongs to the cytochrome P450 family. Requires heme as cofactor. In terms of tissue distribution, strongly expressed in inflorescence tips, young flower buds, seeds, stamen, tapetum and pollen.

The protein resides in the membrane. Acts redundantly with CYP98A9 as tricoumaroylspermidine meta-hydroxylase. Also catalyzes the meta-hydroxylation of the three triferuloylspermidine phenolic rings. Unable to use 5-O-(4-coumaroyl) D-quinate or 5-O-(4-coumaroyl) shikimate as substrates. This Arabidopsis thaliana (Mouse-ear cress) protein is Cytochrome P450 98A8 (CYP98A8).